Here is a 504-residue protein sequence, read N- to C-terminus: Protein DETOXIFICATION 38 (504 aa).

A run of 12 helical transmembrane segments spans residues 56–76 (LLLR…GMGI), 90–110 (LAAA…MLGM), 139–159 (IVLA…YPIL), 170–190 (YMGS…AVYF), 208–228 (ISAA…YAMG), 234–254 (IAYV…FYVI), 273–295 (GLWS…LWYT), 316–336 (SICM…NAAV), 356–376 (TWTA…VVIA), 401–421 (FLAV…VAVG), 433–453 (IGCY…TFNF), and 457–477 (GIWT…LYVT).

This sequence belongs to the multi antimicrobial extrusion (MATE) (TC 2.A.66.1) family.

The protein localises to the membrane. This chain is Protein DETOXIFICATION 38, found in Arabidopsis thaliana (Mouse-ear cress).